The chain runs to 505 residues: Lysine--tRNA ligase 1 (505 aa).

Mg(2+)-binding residues include Asp-415 and Glu-422.

It belongs to the class-II aminoacyl-tRNA synthetase family. As to quaternary structure, homodimer. Mg(2+) is required as a cofactor.

The protein localises to the cytoplasm. The enzyme catalyses tRNA(Lys) + L-lysine + ATP = L-lysyl-tRNA(Lys) + AMP + diphosphate. In Mycobacterium bovis (strain ATCC BAA-935 / AF2122/97), this protein is Lysine--tRNA ligase 1 (lysS1).